Here is a 320-residue protein sequence, read N- to C-terminus: Thioredoxin reductase (320 aa).

An FAD-binding site is contributed by 36–43; the sequence is TGMEQGGQ. Residues Cys-136 and Cys-139 are joined by a disulfide bond. 287-296 lines the FAD pocket; it reads DVTDHVYRQA.

The protein belongs to the class-II pyridine nucleotide-disulfide oxidoreductase family. As to quaternary structure, homodimer. It depends on FAD as a cofactor.

It localises to the cytoplasm. The enzyme catalyses [thioredoxin]-dithiol + NADP(+) = [thioredoxin]-disulfide + NADPH + H(+). The protein is Thioredoxin reductase (trxB) of Coxiella burnetii (strain RSA 493 / Nine Mile phase I).